Reading from the N-terminus, the 873-residue chain is Alanine--tRNA ligase (873 aa).

Residues His-557, His-561, Cys-659, and His-663 each coordinate Zn(2+).

This sequence belongs to the class-II aminoacyl-tRNA synthetase family. Requires Zn(2+) as cofactor.

It localises to the cytoplasm. The enzyme catalyses tRNA(Ala) + L-alanine + ATP = L-alanyl-tRNA(Ala) + AMP + diphosphate. Catalyzes the attachment of alanine to tRNA(Ala) in a two-step reaction: alanine is first activated by ATP to form Ala-AMP and then transferred to the acceptor end of tRNA(Ala). Also edits incorrectly charged Ser-tRNA(Ala) and Gly-tRNA(Ala) via its editing domain. The polypeptide is Alanine--tRNA ligase (Nitrosococcus oceani (strain ATCC 19707 / BCRC 17464 / JCM 30415 / NCIMB 11848 / C-107)).